The sequence spans 688 residues: DNA ligase (688 aa).

NAD(+) contacts are provided by residues 38-42, 87-88, and glutamate 118; these read DEEYD and SL. Lysine 120 acts as the N6-AMP-lysine intermediate in catalysis. NAD(+) is bound by residues arginine 141, glutamate 175, lysine 291, and lysine 315. Residues cysteine 409, cysteine 412, cysteine 428, and cysteine 433 each coordinate Zn(2+). Residues 590 to 679 form the BRCT domain; that stretch reads VKLDILRGLT…AELKGYNFDE (90 aa).

The protein belongs to the NAD-dependent DNA ligase family. LigA subfamily. Mg(2+) serves as cofactor. It depends on Mn(2+) as a cofactor.

The enzyme catalyses NAD(+) + (deoxyribonucleotide)n-3'-hydroxyl + 5'-phospho-(deoxyribonucleotide)m = (deoxyribonucleotide)n+m + AMP + beta-nicotinamide D-nucleotide.. Functionally, DNA ligase that catalyzes the formation of phosphodiester linkages between 5'-phosphoryl and 3'-hydroxyl groups in double-stranded DNA using NAD as a coenzyme and as the energy source for the reaction. It is essential for DNA replication and repair of damaged DNA. The chain is DNA ligase from Thermotoga maritima (strain ATCC 43589 / DSM 3109 / JCM 10099 / NBRC 100826 / MSB8).